The primary structure comprises 508 residues: Photosystem II CP47 reaction center protein (508 aa).

Transmembrane regions (helical) follow at residues 21-36 (SVHI…WAGS), 101-115 (IVFS…IWHW), 140-156 (GIHL…FGAF), 203-218 (IAAG…FHLS), 237-252 (VLSS…AFIV), and 457-472 (TFAL…HGAR).

This sequence belongs to the PsbB/PsbC family. PsbB subfamily. PSII is composed of 1 copy each of membrane proteins PsbA, PsbB, PsbC, PsbD, PsbE, PsbF, PsbH, PsbI, PsbJ, PsbK, PsbL, PsbM, PsbT, PsbX, PsbY, PsbZ, Psb30/Ycf12, at least 3 peripheral proteins of the oxygen-evolving complex and a large number of cofactors. It forms dimeric complexes. Binds multiple chlorophylls. PSII binds additional chlorophylls, carotenoids and specific lipids. is required as a cofactor.

It localises to the plastid. It is found in the chloroplast thylakoid membrane. In terms of biological role, one of the components of the core complex of photosystem II (PSII). It binds chlorophyll and helps catalyze the primary light-induced photochemical processes of PSII. PSII is a light-driven water:plastoquinone oxidoreductase, using light energy to abstract electrons from H(2)O, generating O(2) and a proton gradient subsequently used for ATP formation. This Pinus thunbergii (Japanese black pine) protein is Photosystem II CP47 reaction center protein.